Here is a 49-residue protein sequence, read N- to C-terminus: Light-harvesting protein B-880 alpha chain (49 aa).

Residues 1–12 (MYKLWLLFDPRR) are Cytoplasmic-facing. The helical transmembrane segment at 13 to 33 (TLVALSAFLFVLGLIIHFISL) threads the bilayer. His29 provides a ligand contact to a bacteriochlorophyll. The Periplasmic segment spans residues 34 to 49 (STDRFNWLEGKPAVRA).

Belongs to the antenna complex alpha subunit family. The core complex is formed by different alpha and beta chains, binding bacteriochlorophyll molecules, and arranged most probably in tetrameric structures disposed around the reaction center. The non-pigmented gamma chains may constitute additional components.

It localises to the cell inner membrane. Antenna complexes are light-harvesting systems, which transfer the excitation energy to the reaction centers. The chain is Light-harvesting protein B-880 alpha chain from Rhodoblastus acidophilus (Rhodopseudomonas acidophila).